A 535-amino-acid polypeptide reads, in one-letter code: Light-independent protochlorophyllide reductase subunit B (535 aa).

D36 provides a ligand contact to [4Fe-4S] cluster. D287 serves as the catalytic Proton donor. A substrate-binding site is contributed by 422 to 423; sequence GL.

This sequence belongs to the ChlB/BchB/BchZ family. Protochlorophyllide reductase is composed of three subunits; BchL, BchN and BchB. Forms a heterotetramer of two BchB and two BchN subunits. It depends on [4Fe-4S] cluster as a cofactor.

It catalyses the reaction chlorophyllide a + oxidized 2[4Fe-4S]-[ferredoxin] + 2 ADP + 2 phosphate = protochlorophyllide a + reduced 2[4Fe-4S]-[ferredoxin] + 2 ATP + 2 H2O. Its pathway is porphyrin-containing compound metabolism; bacteriochlorophyll biosynthesis (light-independent). Its function is as follows. Component of the dark-operative protochlorophyllide reductase (DPOR) that uses Mg-ATP and reduced ferredoxin to reduce ring D of protochlorophyllide (Pchlide) to form chlorophyllide a (Chlide). This reaction is light-independent. The NB-protein (BchN-BchB) is the catalytic component of the complex. In Rhodopseudomonas palustris (strain BisB5), this protein is Light-independent protochlorophyllide reductase subunit B.